The following is a 325-amino-acid chain: Protease HtpX homolog 2 (325 aa).

2 helical membrane passes run 10–30 and 41–61; these read LNMA…ALAV and VGLI…QWLF. His-147 serves as a coordination point for Zn(2+). Residue Glu-148 is part of the active site. His-151 is a Zn(2+) binding site. The next 2 helical transmembrane spans lie at 159 to 179 and 196 to 216; these read LLMA…WLFW and LVFL…LLVL. A Zn(2+)-binding site is contributed by Glu-223.

Belongs to the peptidase M48B family. Requires Zn(2+) as cofactor.

It is found in the cell membrane. This chain is Protease HtpX homolog 2, found in Saccharolobus solfataricus (strain ATCC 35092 / DSM 1617 / JCM 11322 / P2) (Sulfolobus solfataricus).